We begin with the raw amino-acid sequence, 798 residues long: Integrin beta-1 (798 aa).

A signal peptide spans 1–20 (MNLQLIFWIGLISSVCYVFG). Over 21-728 (QADENRCLKA…ETPECPTGPD (708 aa)) the chain is Extracellular. Positions 26 to 76 (RCLKANAKSCGECIQAGPNCGWCTNSTFLQEGMPTSARCDDLEALRKKGCH) constitute a PSI domain. 28 disulfides stabilise this stretch: Cys27–Cys45, Cys35–Cys464, Cys38–Cys64, Cys48–Cys75, Cys207–Cys213, Cys261–Cys301, Cys401–Cys415, Cys435–Cys462, Cys466–Cys486, Cys477–Cys489, Cys491–Cys500, Cys502–Cys533, Cys516–Cys531, Cys525–Cys536, Cys538–Cys553, Cys555–Cys576, Cys560–Cys574, Cys568–Cys579, Cys581–Cys590, Cys592–Cys615, Cys599–Cys613, Cys607–Cys618, Cys620–Cys630, Cys633–Cys636, Cys640–Cys691, Cys646–Cys665, Cys649–Cys661, and Cys699–Cys723. Asn50 is a glycosylation site (N-linked (GlcNAc...) asparagine). The span at 75–84 (CHPDDIENPR) shows a compositional bias: basic and acidic residues. The disordered stretch occupies residues 75-107 (CHPDDIENPRGSKNIKKNKNVTNRSKGTAEKLQ). Residues Asn94 and Asn97 are each glycosylated (N-linked (GlcNAc...) asparagine). The VWFA domain occupies 140–378 (DYPIDLYYLM…QLIIDAYNSL (239 aa)). Mg(2+)-binding residues include Ser152 and Ser154. Ser154, Asp157, Asp158, and Glu189 together coordinate Ca(2+). Positions 207–213 (CTSEQNC) are CX3CL1-binding. N-linked (GlcNAc...) asparagine glycosylation occurs at Asn212. Positions 244, 246, 248, and 249 each coordinate Ca(2+). Glu249 serves as a coordination point for Mg(2+). Residue Asn269 is glycosylated (N-linked (GlcNAc...) asparagine). A CX3CL1-binding region spans residues 295–314 (LPNDGHCHLENDVYTMSHYY). Ala362 is a Ca(2+) binding site. Residues Asn363, Asn406, and Asn417 are each glycosylated (N-linked (GlcNAc...) asparagine). The segment at 383–465 (ILENSKLPEG…IILQFICECE (83 aa)) is interaction with TMEM182. 4 I-EGF domains span residues 466–501 (CQSE…RHCE), 502–554 (CSTD…KFCE), 555–591 (CDNF…SACD), and 592–631 (CSLD…PTCE). N-linked (GlcNAc...) asparagine glycosylation is present at Asn481. N-linked (GlcNAc...) asparagine glycosylation is present at Asn520. N-linked (GlcNAc...) asparagine glycosylation is present at Asn584. Asn669 is a glycosylation site (N-linked (GlcNAc...) asparagine). Residues 729–749 (IIPIVAGVVAGIVLIGLALLL) form a helical membrane-spanning segment. The Cytoplasmic segment spans residues 750–798 (IWKLLMIIHDRREFAKFEKEKMNAKWDTGENPIYKSAVTTVVNPKYEGK). Positions 762 to 767 (EFAKFE) are signal for sorting from recycling endosomes; interaction with ACAP1. Thr777 is modified (phosphothreonine). The residue at position 783 (Tyr783) is a Phosphotyrosine. A Phosphoserine modification is found at Ser785. Residues 785 to 792 (SAVTTVVN) are interaction with ITGB1BP1. Residue Thr789 is modified to Phosphothreonine. An N6-acetyllysine; alternate modification is found at Lys794. Residue Lys794 forms a Glycyl lysine isopeptide (Lys-Gly) (interchain with G-Cter in SUMO1); alternate linkage.

This sequence belongs to the integrin beta chain family. As to quaternary structure, interacts with seprase FAP (seprase); the interaction occurs at the cell surface of invadopodia membrane in a collagen-dependent manner. Heterodimer of an alpha and a beta subunit. Beta-1 associates with either alpha-1, alpha-2, alpha-3, alpha-4, alpha-5, alpha-6, alpha-7, alpha-8, alpha-9, alpha-10, alpha-11 or alpha-V. ITGA6:ITGB1 is found in a complex with CD9; interaction takes place in oocytes and is involved in sperm-egg fusion. Binds LGALS3BP and NMRK2, when associated with alpha-7, but not with alpha-5. Interacts with FLNA, FLNB, FLNC and RANBP9. Interacts with KRT1 in the presence of RACK1 and SRC. Interacts with JAML; integrin alpha-4/beta-1 may regulate leukocyte to endothelial cells adhesion by controlling JAML homodimerization. Interacts with RAB21. Interacts (via the cytoplasmic region) with RAB25 (via the hypervariable C-terminal region). Interacts with MYO10. Interacts with ITGB1BP1 (via C-terminal region); the interaction is a prerequisite for focal adhesion disassembly. Interacts with TLN1; the interaction is prevented by competitive binding of ITGB1BP1. Interacts with ACAP1; required for ITGB1 recycling. Interacts with ASAP3. Interacts with FERMT2; the interaction is inhibited in presence of ITGB1BP1. Interacts with DAB2. Interacts with FGR and HCK. Interacts with alpha-7A and alpha-7B in adult skeletal muscle. Interacts with alpha-7B in cardiomyocytes of adult heart. Interacts with EMP2; the interaction may be direct or indirect and ITGB1 has a heterodimer form. ITGA5:ITGB1 interacts with CCN3. ITGA4:ITGB1 is found in a ternary complex with CX3CR1 and CX3CL1. ITGA5:ITGB1 interacts with FBN1. ITGA5:ITGB1 interacts with IL1B. Interacts with MDK. ITGA4:ITGB1 interacts with MDK; this interaction mediates MDK-induced osteoblast cells migration through PXN phosphorylation. ITGA6:ITGB1 interacts with MDK; this interaction mediates MDK-induced neurite-outgrowth. ITGA5:ITGB1 interacts with ACE2. Interacts with TMEM182 and LAMB1. Interacts with tensin TNS3; TNS3 also interacts with PEAK1, thus acting as an adapter molecule to bridge the association of PEAK1 with ITGB1. Interacts with tensin TNS4; the interaction displaces tensin TNS3 from the ITGB1 cytoplasmic tail and promotes ITGB1 stability. Integrin ITGA9:ITGB1 interacts with SPP1/OPN (via N-terminus). Integrin ITGA9:ITGB1 interacts with TNC/TNFN3 (via the 3rd Fibronectin type-III domain). Integrins ITGA4:ITGB1 and ITGA9:ITGB1 interact with SVEP1 (via Sushi domain 21); thereby inhibit Ca(2+) intracellular signaling and as a result repress vasocontraction. ITGA4:ITGB1 and ITGA5:ITGB1 interacts with SELP. Interacts with CD248. ITGA5:ITGB1 interacts with IGFBP1. ITGA4:ITGB1 interacts with BCAM. Interacts with ADGRG6. Expressed in the spleen, thymus, alveolar macrophages, bone marrow, liver and kidney.

The protein resides in the cell membrane. Its subcellular location is the cell projection. It localises to the invadopodium membrane. It is found in the ruffle membrane. The protein localises to the recycling endosome. The protein resides in the melanosome. Its subcellular location is the lamellipodium. It localises to the ruffle. It is found in the cell junction. The protein localises to the focal adhesion. Its function is as follows. Integrins alpha-1/beta-1, alpha-2/beta-1, alpha-10/beta-1 and alpha-11/beta-1 are receptors for collagen. Integrins alpha-1/beta-1 and alpha-2/beta-2 recognize the proline-hydroxylated sequence G-F-P-G-E-R in collagen. Integrins alpha-2/beta-1, alpha-3/beta-1, alpha-4/beta-1, alpha-5/beta-1, alpha-8/beta-1, alpha-10/beta-1, alpha-11/beta-1 and alpha-V/beta-1 are receptors for fibronectin. Alpha-4/beta-1 recognizes one or more domains within the alternatively spliced CS-1 and CS-5 regions of fibronectin. Integrin alpha-5/beta-1 is a receptor for fibrinogen. Integrin alpha-1/beta-1, alpha-2/beta-1, alpha-6/beta-1 and alpha-7/beta-1 are receptors for lamimin. Integrin alpha-6/beta-1 (ITGA6:ITGB1) is present in oocytes and is involved in sperm-egg fusion. Integrin alpha-4/beta-1 is a receptor for VCAM1 and recognizes the sequence Q-I-D-S in VCAM1. Integrin alpha-9/beta-1 is a receptor for VCAM1, cytotactin and osteopontin. It recognizes the sequence A-E-I-D-G-I-E-L in cytotactin. Integrin alpha-3/beta-1 is a receptor for epiligrin, thrombospondin and CSPG4. Integrin alpha-3/beta-1 provides a docking site for FAP (seprase) at invadopodia plasma membranes in a collagen-dependent manner and hence may participate in the adhesion, formation of invadopodia and matrix degradation processes, promoting cell invasion. Alpha-3/beta-1 may mediate with LGALS3 the stimulation by CSPG4 of endothelial cells migration. Integrin alpha-V/beta-1 is a receptor for vitronectin. Beta-1 integrins recognize the sequence R-G-D in a wide array of ligands. When associated with alpha-7/beta-1 integrin, regulates cell adhesion and laminin matrix deposition. Involved in promoting endothelial cell motility and angiogenesis. Involved in osteoblast compaction through the fibronectin fibrillogenesis cell-mediated matrix assembly process and the formation of mineralized bone nodules. May be involved in up-regulation of the activity of kinases such as PKC via binding to KRT1. Together with KRT1 and RACK1, serves as a platform for SRC activation or inactivation. Plays a mechanistic adhesive role during telophase, required for the successful completion of cytokinesis. ITGA4:ITGB1 binds to fractalkine (CX3CL1) and may act as its coreceptor in CX3CR1-dependent fractalkine signaling. ITGA4:ITGB1 and ITGA5:ITGB1 bind to PLA2G2A via a site (site 2) which is distinct from the classical ligand-binding site (site 1) and this induces integrin conformational changes and enhanced ligand binding to site 1. ITGA5:ITGB1 acts as a receptor for fibrillin-1 (FBN1) and mediates R-G-D-dependent cell adhesion to FBN1. ITGA5:ITGB1 acts as a receptor for fibronectin FN1 and mediates R-G-D-dependent cell adhesion to FN1. ITGA5:ITGB1 is a receptor for IL1B and binding is essential for IL1B signaling. ITGA5:ITGB3 is a receptor for soluble CD40LG and is required for CD40/CD40LG signaling. Plays an important role in myoblast differentiation and fusion during skeletal myogenesis. ITGA9:ITGB1 may play a crucial role in SVEP1/polydom-mediated myoblast cell adhesion. Integrins ITGA9:ITGB1 and ITGA4:ITGB1 repress PRKCA-mediated L-type voltage-gated channel Ca(2+) influx and ROCK-mediated calcium sensitivity in vascular smooth muscle cells via their interaction with SVEP1, thereby inhibit vasocontraction. This Sus scrofa (Pig) protein is Integrin beta-1 (ITGB1).